A 34-amino-acid chain; its full sequence is Photosystem II reaction center protein Psb30 (34 aa).

A helical transmembrane segment spans residues 6-26; that stretch reads VIGQLVSTGLIGLLGPAVIIL.

This sequence belongs to the Psb30/Ycf12 family. In terms of assembly, PSII is composed of 1 copy each of membrane proteins PsbA, PsbB, PsbC, PsbD, PsbE, PsbF, PsbH, PsbI, PsbJ, PsbK, PsbL, PsbM, PsbT, PsbX, PsbY, PsbZ, Psb30/Ycf12, peripheral proteins of the oxygen-evolving complex and a large number of cofactors. It forms dimeric complexes.

The protein localises to the plastid. The protein resides in the chloroplast thylakoid membrane. Its function is as follows. A core subunit of photosystem II (PSII), probably helps stabilize the reaction center. The chain is Photosystem II reaction center protein Psb30 from Skeletonema costatum (Marine centric diatom).